We begin with the raw amino-acid sequence, 295 residues long: UDP-N-acetylenolpyruvoylglucosamine reductase (295 aa).

The 166-residue stretch at 23 to 188 (QVGGPADFLA…ISAKFALKPG (166 aa)) folds into the FAD-binding PCMH-type domain. Arginine 167 is an active-site residue. The active-site Proton donor is serine 217. Glutamate 287 is a catalytic residue.

Belongs to the MurB family. Requires FAD as cofactor.

The protein resides in the cytoplasm. The catalysed reaction is UDP-N-acetyl-alpha-D-muramate + NADP(+) = UDP-N-acetyl-3-O-(1-carboxyvinyl)-alpha-D-glucosamine + NADPH + H(+). It participates in cell wall biogenesis; peptidoglycan biosynthesis. Its function is as follows. Cell wall formation. This Streptococcus equi subsp. zooepidemicus (strain H70) protein is UDP-N-acetylenolpyruvoylglucosamine reductase.